Consider the following 569-residue polypeptide: Proline--tRNA ligase (569 aa).

It belongs to the class-II aminoacyl-tRNA synthetase family. ProS type 1 subfamily. In terms of assembly, homodimer.

Its subcellular location is the cytoplasm. It carries out the reaction tRNA(Pro) + L-proline + ATP = L-prolyl-tRNA(Pro) + AMP + diphosphate. Its function is as follows. Catalyzes the attachment of proline to tRNA(Pro) in a two-step reaction: proline is first activated by ATP to form Pro-AMP and then transferred to the acceptor end of tRNA(Pro). As ProRS can inadvertently accommodate and process non-cognate amino acids such as alanine and cysteine, to avoid such errors it has two additional distinct editing activities against alanine. One activity is designated as 'pretransfer' editing and involves the tRNA(Pro)-independent hydrolysis of activated Ala-AMP. The other activity is designated 'posttransfer' editing and involves deacylation of mischarged Ala-tRNA(Pro). The misacylated Cys-tRNA(Pro) is not edited by ProRS. The sequence is that of Proline--tRNA ligase from Campylobacter jejuni subsp. doylei (strain ATCC BAA-1458 / RM4099 / 269.97).